The sequence spans 189 residues: Protein sisterless A (189 aa).

A disordered region spans residues aspartate 93–arginine 124. Basic and acidic residues predominate over residues aspartate 108–arginine 121.

As to quaternary structure, homodimer. Interacts with dpn (via bHLH motif). Interacts with da (via bHLH motif). Interacts with Bap60. Localizes to all the embryonic nuclei until nuclear cycle 9, when expression ceases in the prepole cell nuclei. Associates with the somatic nuclei through cycle 10. By nuclear cycle 12, distributes uniformly in the somatic portion of the embryo and no longer associates with the nuclei. After early cycle 14 (beginning of cellularization) there is very little or no expression in the periphery of the embryo or in either the somatic or germ cells. In the yolk, accumulates at the nuclei from nuclear cycle 8 until 10-11 hours after fertilization.

Its subcellular location is the nucleus. Involved in sex determination and dosage compensation. Required for proper expression of Sxl in embryonic somatic cells. Also has an essential function in the yolk nuclei. Involved in endoderm migration and midgut formation. This Drosophila melanogaster (Fruit fly) protein is Protein sisterless A (sisA).